Reading from the N-terminus, the 400-residue chain is Diphosphomevalonate decarboxylase (400 aa).

(R)-5-diphosphomevalonate is bound by residues 25–28, Arg80, 155–160, and Thr211; these read YWGK and SGSACR.

The protein belongs to the diphosphomevalonate decarboxylase family. As to quaternary structure, homodimer.

The protein localises to the cytoplasm. It carries out the reaction (R)-5-diphosphomevalonate + ATP = isopentenyl diphosphate + ADP + phosphate + CO2. It participates in steroid biosynthesis; cholesterol biosynthesis. Functionally, catalyzes the ATP dependent decarboxylation of (R)-5-diphosphomevalonate to form isopentenyl diphosphate (IPP). Functions in the mevalonate (MVA) pathway leading to isopentenyl diphosphate (IPP), a key precursor for the biosynthesis of isoprenoids and sterol synthesis. This chain is Diphosphomevalonate decarboxylase (mvd), found in Danio rerio (Zebrafish).